Consider the following 88-residue polypeptide: Enticin (88 aa).

The signal sequence occupies residues 1 to 19 (MKTALPLLLLTCLVAAVQS). Disulfide bonds link C25/C33, C40/C52, and C59/C67. The propeptide occupies 69-88 (REQSQLNHDHLNNHTTTQQP).

Binds to attractin and temptin.

The protein resides in the secreted. A component of the complex of water-borne protein pheromones that stimulates attraction and mating behavior. This is Enticin from Aplysia californica (California sea hare).